The sequence spans 259 residues: Protein CWC15 homolog (259 aa).

The tract at residues 1–182 is disordered; sequence MTTAARPTFD…EKKQEDERIR (182 aa). Residues 52–71 are compositionally biased toward basic and acidic residues; the sequence is DENRNRDFRKELEEREREAR. 2 stretches are compositionally biased toward low complexity: residues 72-82 and 114-126; these read SGTGATSSSSG and QQQA…QQAA. A compositionally biased stretch (acidic residues) spans 129-150; it reads DADEPLDNDSSDSDSDSDDDDA. A coiled-coil region spans residues 150 to 182; it reads AALLAELQKIKQERLQETARRESEKKQEDERIR. Over residues 157 to 182 the composition is skewed to basic and acidic residues; it reads QKIKQERLQETARRESEKKQEDERIR.

It belongs to the CWC15 family.

In terms of biological role, involved in pre-mRNA splicing. The chain is Protein CWC15 homolog (c12.1) from Drosophila melanogaster (Fruit fly).